The chain runs to 482 residues: 2-succinylbenzoate--CoA ligase (482 aa).

Belongs to the ATP-dependent AMP-binding enzyme family. MenE subfamily.

It catalyses the reaction 2-succinylbenzoate + ATP + CoA = 2-succinylbenzoyl-CoA + AMP + diphosphate. It participates in quinol/quinone metabolism; 1,4-dihydroxy-2-naphthoate biosynthesis; 1,4-dihydroxy-2-naphthoate from chorismate: step 5/7. It functions in the pathway quinol/quinone metabolism; menaquinone biosynthesis. Converts 2-succinylbenzoate (OSB) to 2-succinylbenzoyl-CoA (OSB-CoA). This is 2-succinylbenzoate--CoA ligase from Bacillus thuringiensis subsp. konkukian (strain 97-27).